The sequence spans 232 residues: Ribosomal RNA small subunit methyltransferase G (232 aa).

S-adenosyl-L-methionine contacts are provided by residues Gly93, Leu98, 144-145 (VE), and Arg163.

Belongs to the methyltransferase superfamily. RNA methyltransferase RsmG family.

The protein resides in the cytoplasm. The enzyme catalyses guanosine(527) in 16S rRNA + S-adenosyl-L-methionine = N(7)-methylguanosine(527) in 16S rRNA + S-adenosyl-L-homocysteine. Specifically methylates the N7 position of guanine in position 527 of 16S rRNA. The protein is Ribosomal RNA small subunit methyltransferase G of Burkholderia pseudomallei (strain 1106a).